The primary structure comprises 212 residues: Peptide methionine sulfoxide reductase MsrA (212 aa).

Residue Cys52 is part of the active site.

It belongs to the MsrA Met sulfoxide reductase family.

It carries out the reaction L-methionyl-[protein] + [thioredoxin]-disulfide + H2O = L-methionyl-(S)-S-oxide-[protein] + [thioredoxin]-dithiol. The catalysed reaction is [thioredoxin]-disulfide + L-methionine + H2O = L-methionine (S)-S-oxide + [thioredoxin]-dithiol. In terms of biological role, has an important function as a repair enzyme for proteins that have been inactivated by oxidation. Catalyzes the reversible oxidation-reduction of methionine sulfoxide in proteins to methionine. The polypeptide is Peptide methionine sulfoxide reductase MsrA (Escherichia coli (strain SMS-3-5 / SECEC)).